The primary structure comprises 245 residues: Protein crossbronx (245 aa).

One can recognise a UBC core domain in the interval 20-177 (HQEYKILAEY…VQESIAESKA (158 aa)).

The protein belongs to the ubiquitin-conjugating enzyme family. FTS subfamily.

In Drosophila mojavensis (Fruit fly), this protein is Protein crossbronx (cbx).